The primary structure comprises 400 residues: Nicotinate phosphoribosyltransferase (400 aa).

His-220 carries the phosphohistidine; by autocatalysis modification.

The protein belongs to the NAPRTase family. Post-translationally, transiently phosphorylated on a His residue during the reaction cycle. Phosphorylation strongly increases the affinity for substrates and increases the rate of nicotinate D-ribonucleotide production. Dephosphorylation regenerates the low-affinity form of the enzyme, leading to product release.

It catalyses the reaction nicotinate + 5-phospho-alpha-D-ribose 1-diphosphate + ATP + H2O = nicotinate beta-D-ribonucleotide + ADP + phosphate + diphosphate. The protein operates within cofactor biosynthesis; NAD(+) biosynthesis; nicotinate D-ribonucleotide from nicotinate: step 1/1. In terms of biological role, catalyzes the synthesis of beta-nicotinate D-ribonucleotide from nicotinate and 5-phospho-D-ribose 1-phosphate at the expense of ATP. This chain is Nicotinate phosphoribosyltransferase, found in Salmonella typhimurium (strain LT2 / SGSC1412 / ATCC 700720).